The chain runs to 364 residues: Medium-wave-sensitive opsin 1 (364 aa).

The Extracellular portion of the chain corresponds to Met-1–Val-52. The segment at Asp-17–Pro-43 is required for 11-cis-retinal regeneration. The N-linked (GlcNAc...) asparagine glycan is linked to Asn-34. A helical transmembrane segment spans residues Tyr-53–Ala-77. Residues Thr-78–Asn-89 lie on the Cytoplasmic side of the membrane. The helical transmembrane segment at Trp-90–Val-115 threads the bilayer. Residues Tyr-116–Glu-129 are Extracellular-facing. Cys-126 and Cys-203 are oxidised to a cystine. The chain crosses the membrane as a helical span at residues Gly-130–Trp-149. Residues Glu-150–Leu-168 are Cytoplasmic-facing. A helical transmembrane segment spans residues Ala-169–Ser-192. Residues Arg-193–Ser-218 are Extracellular-facing. Residues Tyr-219–Ile-246 form a helical membrane-spanning segment. Residues Arg-247–Arg-268 lie on the Cytoplasmic side of the membrane. A helical membrane pass occupies residues Met-269 to Thr-292. Residues Ala-293 to His-300 are Extracellular-facing. A helical membrane pass occupies residues Pro-301–Met-325. Lys-312 carries the N6-(retinylidene)lysine modification. At Asn-326–Ala-364 the chain is on the cytoplasmic side.

It belongs to the G-protein coupled receptor 1 family. Opsin subfamily. Monomer. Homodimer. Homotetramer. O-glycosylated. In terms of processing, phosphorylated on some or all of the serine and threonine residues present in the C-terminal region. As to expression, expressed in cone photoreceptor cells.

The protein resides in the membrane. Visual pigments are the light-absorbing molecules that mediate vision. They consist of an apoprotein, opsin, covalently linked to cis-retinal. May increase spectral sensitivity in dim light. This Cavia porcellus (Guinea pig) protein is Medium-wave-sensitive opsin 1 (OPN1MW).